We begin with the raw amino-acid sequence, 198 residues long: NADH-quinone oxidoreductase subunit I (198 aa).

4Fe-4S ferredoxin-type domains lie at 42 to 72 (LNRWPDGLEKCVGCELCAWACPADAIYVEGA) and 88 to 117 (RVYEINYLRCILCGMCIEACPTRALTMTND). Residues C52, C55, C58, C62, C97, C100, C103, and C107 each contribute to the [4Fe-4S] cluster site. The interval 137–198 (APLKEGMEQP…DTQHKDEEAA (62 aa)) is disordered. A compositionally biased stretch (basic and acidic residues) spans 182–198 (AHRDDDNDTQHKDEEAA).

It belongs to the complex I 23 kDa subunit family. As to quaternary structure, NDH-1 is composed of 14 different subunits. Subunits NuoA, H, J, K, L, M, N constitute the membrane sector of the complex. Requires [4Fe-4S] cluster as cofactor.

It localises to the cell membrane. The catalysed reaction is a quinone + NADH + 5 H(+)(in) = a quinol + NAD(+) + 4 H(+)(out). Its function is as follows. NDH-1 shuttles electrons from NADH, via FMN and iron-sulfur (Fe-S) centers, to quinones in the respiratory chain. The immediate electron acceptor for the enzyme in this species is believed to be ubiquinone. Couples the redox reaction to proton translocation (for every two electrons transferred, four hydrogen ions are translocated across the cytoplasmic membrane), and thus conserves the redox energy in a proton gradient. The protein is NADH-quinone oxidoreductase subunit I of Cutibacterium acnes (strain DSM 16379 / KPA171202) (Propionibacterium acnes).